Here is a 268-residue protein sequence, read N- to C-terminus: Tryptophan synthase alpha chain (268 aa).

Catalysis depends on proton acceptor residues Glu49 and Asp60.

It belongs to the TrpA family. As to quaternary structure, tetramer of two alpha and two beta chains.

The catalysed reaction is (1S,2R)-1-C-(indol-3-yl)glycerol 3-phosphate + L-serine = D-glyceraldehyde 3-phosphate + L-tryptophan + H2O. The protein operates within amino-acid biosynthesis; L-tryptophan biosynthesis; L-tryptophan from chorismate: step 5/5. The alpha subunit is responsible for the aldol cleavage of indoleglycerol phosphate to indole and glyceraldehyde 3-phosphate. This chain is Tryptophan synthase alpha chain, found in Pseudomonas aeruginosa (strain UCBPP-PA14).